A 323-amino-acid polypeptide reads, in one-letter code: Ferrochelatase (323 aa).

Residues His196 and Glu277 each coordinate Fe cation.

Belongs to the ferrochelatase family.

It localises to the cytoplasm. It catalyses the reaction heme b + 2 H(+) = protoporphyrin IX + Fe(2+). It functions in the pathway porphyrin-containing compound metabolism; protoheme biosynthesis; protoheme from protoporphyrin-IX: step 1/1. Its function is as follows. Catalyzes the ferrous insertion into protoporphyrin IX. The sequence is that of Ferrochelatase from Haemophilus influenzae (strain ATCC 51907 / DSM 11121 / KW20 / Rd).